The chain runs to 335 residues: MARQGVIASMHALALLLGAFAAIPTGVQSIGVCYGVNGDNLPPASDVVQLYQSNGINLLRIYFPDANPLNALSGTSIGLIMDVPNTDLASLASDPSAAAAWVQSNVQASRRSACRYIAVGNEVSGGDTGSILPAMQNLNAALANAGLGGSIKVSTAVQSDVTQGFPPSQGTFSQGYMAPSRQYLQSTGAPLLSNVYPYFSYVGNPAQIDLKYALFTSPGTVVQDGSNAYQNLFDALVDTFVSALEENAGAGNVPVVVSESGWPSAGGDAATAANAQTYNQNLINHVGQGTPKRPGPIETYIFAMFNEDQKTGAESERHFGLFNPDKSPVYPINFS.

The first 29 residues, M1 to S29, serve as a signal peptide directing secretion. The active-site Proton donor is the E122. E259 acts as the Nucleophile in catalysis.

It belongs to the glycosyl hydrolase 17 family. As to expression, accumulates in aleurone layers. Much lower levels are found in the embryo, and none in starchy endosperm.

Its subcellular location is the secreted. The protein resides in the extracellular space. The enzyme catalyses Hydrolysis of (1-&gt;3)-beta-D-glucosidic linkages in (1-&gt;3)-beta-D-glucans.. Is thought to be an important plant defense-related product against fungal pathogens. This chain is Glucan endo-1,3-beta-glucosidase, acidic isoform, found in Zea mays (Maize).